We begin with the raw amino-acid sequence, 338 residues long: RNA 3'-terminal phosphate cyclase (338 aa).

ATP-binding positions include Q103 and Y283–Q287. The Tele-AMP-histidine intermediate role is filled by H308.

Belongs to the RNA 3'-terminal cyclase family. Type 1 subfamily.

It localises to the cytoplasm. It catalyses the reaction a 3'-end 3'-phospho-ribonucleotide-RNA + ATP = a 3'-end 2',3'-cyclophospho-ribonucleotide-RNA + AMP + diphosphate. In terms of biological role, catalyzes the conversion of 3'-phosphate to a 2',3'-cyclic phosphodiester at the end of RNA. The mechanism of action of the enzyme occurs in 3 steps: (A) adenylation of the enzyme by ATP; (B) transfer of adenylate to an RNA-N3'P to produce RNA-N3'PP5'A; (C) and attack of the adjacent 2'-hydroxyl on the 3'-phosphorus in the diester linkage to produce the cyclic end product. The biological role of this enzyme is unknown but it is likely to function in some aspects of cellular RNA processing. The protein is RNA 3'-terminal phosphate cyclase of Escherichia coli (strain SMS-3-5 / SECEC).